A 132-amino-acid polypeptide reads, in one-letter code: Agouti-signaling protein (132 aa).

Positions 1–22 (MDVTRLLLATLLVFLCFFTAYS) are cleaved as a signal peptide. Asparagine 39 is a glycosylation site (N-linked (GlcNAc...) asparagine). The tract at residues 61 to 87 (QISRKEAEKKRSSKKEASMKKVARPRT) is disordered. Over residues 63 to 79 (SRKEAEKKRSSKKEASM) the composition is skewed to basic and acidic residues. Cystine bridges form between cysteine 93–cysteine 108, cysteine 100–cysteine 114, cysteine 107–cysteine 125, cysteine 111–cysteine 132, and cysteine 116–cysteine 123. In terms of domain architecture, Agouti spans 93-132 (CVATRDSCKSPAPACCDPCASCQCRFFRSACSCRVLSLNC).

It localises to the secreted. In terms of biological role, involved in the regulation of melanogenesis. The binding of ASP to MC1R precludes alpha-MSH initiated signaling and thus blocks production of cAMP, leading to a down-regulation of eumelanogenesis (brown/black pigment) and thus increasing synthesis of pheomelanin (yellow/red pigment). This chain is Agouti-signaling protein (ASIP), found in Macaca nigra (Celebes black macaque).